The following is a 609-amino-acid chain: UvrABC system protein C (609 aa).

The 79-residue stretch at 16–94 (SSAGVYRMYD…IKQYMPKYNV (79 aa)) folds into the GIY-YIG domain. Residues 203–238 (KQVISELVAKMEEAAEQQAYEQAARFRDQIMALRRV) form the UVR domain.

Belongs to the UvrC family. Interacts with UvrB in an incision complex.

Its subcellular location is the cytoplasm. Functionally, the UvrABC repair system catalyzes the recognition and processing of DNA lesions. UvrC both incises the 5' and 3' sides of the lesion. The N-terminal half is responsible for the 3' incision and the C-terminal half is responsible for the 5' incision. This Shewanella sp. (strain MR-4) protein is UvrABC system protein C.